Consider the following 318-residue polypeptide: Acetylglutamate kinase (318 aa).

Substrate-binding positions include 80 to 81 (GG), R102, and N203.

The protein belongs to the acetylglutamate kinase family. ArgB subfamily.

It localises to the cytoplasm. It carries out the reaction N-acetyl-L-glutamate + ATP = N-acetyl-L-glutamyl 5-phosphate + ADP. Its pathway is amino-acid biosynthesis; L-arginine biosynthesis; N(2)-acetyl-L-ornithine from L-glutamate: step 2/4. In terms of biological role, catalyzes the ATP-dependent phosphorylation of N-acetyl-L-glutamate. This is Acetylglutamate kinase from Bifidobacterium adolescentis (strain ATCC 15703 / DSM 20083 / NCTC 11814 / E194a).